Reading from the N-terminus, the 213-residue chain is Thymidylate kinase (213 aa).

Gly11 to Thr18 serves as a coordination point for ATP.

It belongs to the thymidylate kinase family.

The catalysed reaction is dTMP + ATP = dTDP + ADP. Functionally, phosphorylation of dTMP to form dTDP in both de novo and salvage pathways of dTTP synthesis. In Oenococcus oeni (strain ATCC BAA-331 / PSU-1), this protein is Thymidylate kinase.